We begin with the raw amino-acid sequence, 160 residues long: 6-hydroxypseudooxynicotine dehydrogenase complex subunit beta (160 aa).

In terms of domain architecture, 2Fe-2S ferredoxin-type spans Phe-4–Leu-80. Cys-42, Cys-47, Cys-50, Cys-62, Cys-101, Cys-104, Cys-137, and Cys-139 together coordinate [2Fe-2S] cluster.

In terms of assembly, heterohexamer of 2 alpha (kdhA), 2 beta (kdhB) and 2 gamma (kdhC) subunit. Dimer of heterotrimers. [2Fe-2S] cluster serves as cofactor.

The catalysed reaction is 6-hydroxypseudooxynicotine + A + H2O = 2,6-dihydroxypseudooxynicotine + AH2. It participates in alkaloid degradation; nicotine degradation. In terms of biological role, molybdo-flavoprotein enzyme complex involved in nicotine degradation. The subunit gamma (large subunit) contains the substrate-binding sites, the subunit alpha (medium subunit) binds FAD and the subunit beta (small subunit) has a 2Fe-2S ferredoxin-type domain which binds 2 2Fe-2S clusters. The polypeptide is 6-hydroxypseudooxynicotine dehydrogenase complex subunit beta (kdhB) (Paenarthrobacter nicotinovorans (Arthrobacter nicotinovorans)).